The following is a 433-amino-acid chain: Zinc finger protein CONSTANS-LIKE 15 (433 aa).

Residues Cys9, Cys12, Cys32, His37, Cys52, Cys55, Cys75, and His80 each contribute to the Zn(2+) site. The segment at 9 to 51 (CDFCGERTAVLFCRADTAKLCLPCDQQVHTANLLSRKHVRSQI) adopts a B box-type 1; atypical zinc-finger fold. The B box-type 2; atypical zinc-finger motif lies at 52–94 (CDNCGNEPVSVRCFTDNLILCQECDWDVHGSCSVSDAHVRSAV). The disordered stretch occupies residues 319 to 353 (DDYKRSTSGQVQPTKSESNNRPITFGSEKGSNSSS). Positions 324–340 (STSGQVQPTKSESNNRP) are enriched in polar residues. A coiled-coil region spans residues 374–398 (TKADLERLAQNRGDAMQRYKEKRKT). Residues 385-427 (RGDAMQRYKEKRKTRRYDKTIRYESRKARADTRLRVRGRFVKA) form the CCT domain.

Belongs to the CONSTANS family.

Its subcellular location is the nucleus. In Arabidopsis thaliana (Mouse-ear cress), this protein is Zinc finger protein CONSTANS-LIKE 15 (COL15).